The primary structure comprises 290 residues: Ribosomal RNA small subunit methyltransferase A (290 aa).

Residues asparagine 27, leucine 29, glycine 54, glutamate 75, aspartate 100, and asparagine 125 each coordinate S-adenosyl-L-methionine.

It belongs to the class I-like SAM-binding methyltransferase superfamily. rRNA adenine N(6)-methyltransferase family. RsmA subfamily.

The protein localises to the cytoplasm. It catalyses the reaction adenosine(1518)/adenosine(1519) in 16S rRNA + 4 S-adenosyl-L-methionine = N(6)-dimethyladenosine(1518)/N(6)-dimethyladenosine(1519) in 16S rRNA + 4 S-adenosyl-L-homocysteine + 4 H(+). Functionally, specifically dimethylates two adjacent adenosines (A1518 and A1519) in the loop of a conserved hairpin near the 3'-end of 16S rRNA in the 30S particle. May play a critical role in biogenesis of 30S subunits. This chain is Ribosomal RNA small subunit methyltransferase A, found in Streptococcus pneumoniae (strain 70585).